A 650-amino-acid polypeptide reads, in one-letter code: DNA mismatch repair protein MutL (650 aa).

Disordered stretches follow at residues 358–392 (EASQ…QPLV) and 408–448 (QPRP…QSAA). A compositionally biased stretch (pro residues) spans 367–384 (TPQPRPALTPGHPDPPPQ). The span at 430–444 (PYAPIAAAPVPASEP) shows a compositional bias: low complexity.

It belongs to the DNA mismatch repair MutL/HexB family.

This protein is involved in the repair of mismatches in DNA. It is required for dam-dependent methyl-directed DNA mismatch repair. May act as a 'molecular matchmaker', a protein that promotes the formation of a stable complex between two or more DNA-binding proteins in an ATP-dependent manner without itself being part of a final effector complex. The protein is DNA mismatch repair protein MutL of Geobacter sp. (strain M21).